The following is a 649-amino-acid chain: Replication factor C small subunit (649 aa).

55-385 (GPAGVGKCVT…GCIPTVMHNT (331 aa)) contacts ATP.

Belongs to the activator 1 small subunits family. RfcS subfamily. As to quaternary structure, heteromultimer composed of small subunits (RfcS) and large subunits (RfcL). Post-translationally, this protein undergoes a protein self splicing that involves a post-translational excision of the intervening region (intein) followed by peptide ligation.

Functionally, part of the RFC clamp loader complex which loads the PCNA sliding clamp onto DNA. In Haloquadratum walsbyi (strain DSM 16790 / HBSQ001), this protein is Replication factor C small subunit (rfcS).